The following is a 70-amino-acid chain: Gene 4.3 protein (70 aa).

This Escherichia coli (Bacteriophage T3) protein is Gene 4.3 protein (4.3).